Consider the following 468-residue polypeptide: Sorting and assembly machinery component 50 homolog B (468 aa).

Positions 1–25 are disordered; the sequence is MGTVHARSLDPLPMNGPDFGSPDDA. The 81-residue stretch at 44-124 folds into the POTRA domain; sequence VVVQRVHFEG…LDVTFEVTEL (81 aa).

Belongs to the SAM50/omp85 family. In terms of assembly, associates with the mitochondrial contact site and cristae organizing system (MICOS) complex (also known as MINOS or MitOS complex).

The protein localises to the mitochondrion outer membrane. Its function is as follows. May play a role in the maintenance of the structure of mitochondrial cristae. The protein is Sorting and assembly machinery component 50 homolog B (samm50-b) of Xenopus laevis (African clawed frog).